A 244-amino-acid polypeptide reads, in one-letter code: tRNA pseudouridine synthase B (244 aa).

Catalysis depends on Asp46, which acts as the Nucleophile.

Belongs to the pseudouridine synthase TruB family. Type 1 subfamily.

The catalysed reaction is uridine(55) in tRNA = pseudouridine(55) in tRNA. Functionally, responsible for synthesis of pseudouridine from uracil-55 in the psi GC loop of transfer RNAs. In Bordetella parapertussis (strain 12822 / ATCC BAA-587 / NCTC 13253), this protein is tRNA pseudouridine synthase B.